The chain runs to 64 residues: Large ribosomal subunit protein bL33 (64 aa).

This sequence belongs to the bacterial ribosomal protein bL33 family.

This chain is Large ribosomal subunit protein bL33, found in Synechococcus sp. (strain WH7803).